The following is a 356-amino-acid chain: Photosystem II protein D1 4 (356 aa).

3 helical membrane-spanning segments follow: residues 32–49 (YIGW…AATT), 121–136 (HFLI…FWEL), and 145–159 (WIAV…AATS). A chlorophyll a-binding site is contributed by histidine 121. [CaMn4O5] cluster is bound by residues aspartate 173 and aspartate 192. A helical transmembrane segment spans residues 200–221 (FHMLGVAGVFGGALLSSLHGSL). Position 201 (histidine 201) interacts with chlorophyll a. Residue histidine 218 coordinates a quinone. The Fe cation site is built by histidine 218 and histidine 276. The chain crosses the membrane as a helical span at residues 278 to 292 (LLAALPTIGIWFAAM). Residue histidine 336 participates in [CaMn4O5] cluster binding.

Belongs to the reaction center PufL/M/PsbA/D family. In terms of assembly, PSII is composed of 1 copy each of membrane proteins PsbA, PsbB, PsbC, PsbD, PsbE, PsbF, PsbH, PsbI, PsbJ, PsbK, PsbL, PsbM, PsbT, PsbX, PsbY, PsbZ, Psb30/Ycf12, peripheral proteins PsbO, CyanoQ (PsbQ), PsbU, PsbV and a large number of cofactors. It forms dimeric complexes. The D1/D2 heterodimer binds P680, chlorophylls that are the primary electron donor of PSII, and subsequent electron acceptors. It shares a non-heme iron and each subunit binds pheophytin, quinone, additional chlorophylls, carotenoids and lipids. D1 provides most of the ligands for the Mn4-Ca-O5 cluster of the oxygen-evolving complex (OEC). There is also a Cl(-1) ion associated with D1 and D2, which is required for oxygen evolution. The PSII complex binds additional chlorophylls, carotenoids and specific lipids. serves as cofactor. Tyr-164 forms a radical intermediate that is referred to as redox-active TyrZ, YZ or Y-Z.

The protein localises to the cellular thylakoid membrane. It carries out the reaction 2 a plastoquinone + 4 hnu + 2 H2O = 2 a plastoquinol + O2. Functionally, photosystem II (PSII) is a light-driven water:plastoquinone oxidoreductase that uses light energy to abstract electrons from H(2)O, generating O(2) and a proton gradient subsequently used for ATP formation. It consists of a core antenna complex that captures photons, and an electron transfer chain that converts photonic excitation into a charge separation. The D1/D2 (PsbA/PsbD) reaction center heterodimer binds P680, the primary electron donor of PSII as well as several subsequent electron acceptors. The chain is Photosystem II protein D1 4 from Trichormus variabilis (strain ATCC 29413 / PCC 7937) (Anabaena variabilis).